The sequence spans 426 residues: Probable imidazolonepropionase (426 aa).

4-imidazolone-5-propanoate is bound by residues Tyr-159 and His-192. Tyr-159 serves as a coordination point for N-formimidoyl-L-glutamate. His-260 serves as a coordination point for Fe(3+). His-260 lines the Zn(2+) pocket. Glu-263 serves as a coordination point for 4-imidazolone-5-propanoate. Fe(3+) is bound at residue Asp-334. Asp-334 serves as a coordination point for Zn(2+). Asn-336 is an N-formimidoyl-L-glutamate binding site.

It belongs to the metallo-dependent hydrolases superfamily. HutI family. The cofactor is Zn(2+). Requires Fe(3+) as cofactor.

The enzyme catalyses 4-imidazolone-5-propanoate + H2O = N-formimidoyl-L-glutamate. It functions in the pathway amino-acid degradation; L-histidine degradation into L-glutamate; N-formimidoyl-L-glutamate from L-histidine: step 3/3. This chain is Probable imidazolonepropionase (AMDHD1), found in Bos taurus (Bovine).